Here is a 1029-residue protein sequence, read N- to C-terminus: Carbamoyl phosphate synthase large chain (1029 aa).

Positions 1–402 (MPKRTDLQTI…SLQKALRSTE (402 aa)) are carboxyphosphate synthetic domain. ATP-binding residues include arginine 129, arginine 169, glycine 175, glycine 176, glutamate 208, isoleucine 210, glutamate 215, glycine 241, valine 242, histidine 243, glutamine 285, and glutamate 299. The ATP-grasp 1 domain maps to 133-328 (QAAMKKIGVE…IAKIAALLAV (196 aa)). Positions 285, 299, and 301 each coordinate Mg(2+). 3 residues coordinate Mn(2+): glutamine 285, glutamate 299, and asparagine 301. An oligomerization domain region spans residues 403 to 544 (SDIRGVYAEM…YHYSTYEWED (142 aa)). The segment at 545–929 (EVTGTDKPKV…AFYRAQLGAK (385 aa)) is carbamoyl phosphate synthetic domain. The ATP-grasp 2 domain occupies 671–863 (NALCERLGLS…LAKSAARIAV (193 aa)). Residues arginine 707, glutamine 747, leucine 749, glutamate 754, glycine 779, valine 780, histidine 781, serine 782, glutamine 822, and glutamate 834 each contribute to the ATP site. Mg(2+)-binding residues include glutamine 822, glutamate 834, and asparagine 836. Positions 822, 834, and 836 each coordinate Mn(2+). Positions 930 to 1028 (SYLPLSGTAL…QDWQTQEAVA (99 aa)) constitute an MGS-like domain. The segment at 930-1029 (SYLPLSGTAL…DWQTQEAVAG (100 aa)) is allosteric domain.

The protein belongs to the CarB family. Composed of two chains; the small (or glutamine) chain promotes the hydrolysis of glutamine to ammonia, which is used by the large (or ammonia) chain to synthesize carbamoyl phosphate. Tetramer of heterodimers (alpha,beta)4. Mg(2+) is required as a cofactor. The cofactor is Mn(2+).

It catalyses the reaction hydrogencarbonate + L-glutamine + 2 ATP + H2O = carbamoyl phosphate + L-glutamate + 2 ADP + phosphate + 2 H(+). It carries out the reaction hydrogencarbonate + NH4(+) + 2 ATP = carbamoyl phosphate + 2 ADP + phosphate + 2 H(+). Its pathway is amino-acid biosynthesis; L-arginine biosynthesis; carbamoyl phosphate from bicarbonate: step 1/1. The protein operates within pyrimidine metabolism; UMP biosynthesis via de novo pathway; (S)-dihydroorotate from bicarbonate: step 1/3. Large subunit of the glutamine-dependent carbamoyl phosphate synthetase (CPSase). CPSase catalyzes the formation of carbamoyl phosphate from the ammonia moiety of glutamine, carbonate, and phosphate donated by ATP, constituting the first step of 2 biosynthetic pathways, one leading to arginine and/or urea and the other to pyrimidine nucleotides. The large subunit (synthetase) binds the substrates ammonia (free or transferred from glutamine from the small subunit), hydrogencarbonate and ATP and carries out an ATP-coupled ligase reaction, activating hydrogencarbonate by forming carboxy phosphate which reacts with ammonia to form carbamoyl phosphate. The protein is Carbamoyl phosphate synthase large chain of Deinococcus deserti (strain DSM 17065 / CIP 109153 / LMG 22923 / VCD115).